Reading from the N-terminus, the 277-residue chain is Protein CMSS1 (277 aa).

Acidic residues predominate over residues 1–14 (MADDLGNEWWEEPA). Residues 1-91 (MADDLGNEWW…QHAPTAGTPE (91 aa)) form a disordered region. Positions 24-34 (EEVKESEESKG) are enriched in basic and acidic residues. Over residues 35–52 (NKKKKIPSGKTQVKRKKE) the composition is skewed to basic residues. Over residues 53–66 (VKVSQEAEKEDSAP) the composition is skewed to basic and acidic residues.

This sequence belongs to the CMS1 family.

In Xenopus laevis (African clawed frog), this protein is Protein CMSS1 (cmss1).